The primary structure comprises 94 residues: Co-chaperonin GroES (94 aa).

This sequence belongs to the GroES chaperonin family. In terms of assembly, heptamer of 7 subunits arranged in a ring. Interacts with the chaperonin GroEL.

It is found in the cytoplasm. Together with the chaperonin GroEL, plays an essential role in assisting protein folding. The GroEL-GroES system forms a nano-cage that allows encapsulation of the non-native substrate proteins and provides a physical environment optimized to promote and accelerate protein folding. GroES binds to the apical surface of the GroEL ring, thereby capping the opening of the GroEL channel. In Geobacillus thermodenitrificans (strain NG80-2), this protein is Co-chaperonin GroES.